The sequence spans 334 residues: Fructose-1,6-bisphosphatase class 1 (334 aa).

Mg(2+) contacts are provided by Glu90, Asp113, Leu115, and Asp116. Residues 116–119 (DGSS), Asn209, Tyr242, and Lys272 each bind substrate. Glu278 is a Mg(2+) binding site.

This sequence belongs to the FBPase class 1 family. Homotetramer. Mg(2+) serves as cofactor.

The protein resides in the cytoplasm. The enzyme catalyses beta-D-fructose 1,6-bisphosphate + H2O = beta-D-fructose 6-phosphate + phosphate. Its pathway is carbohydrate biosynthesis; gluconeogenesis. This is Fructose-1,6-bisphosphatase class 1 from Actinobacillus pleuropneumoniae serotype 7 (strain AP76).